A 698-amino-acid polypeptide reads, in one-letter code: Protein no-on-transient A (698 aa).

Polar residues predominate over residues 1 to 29 (MENSVKMDTSGNSTPLPQRQARANNQPNK). Residues 1 to 247 (MENSVKMDTS…SGGGNNSQRG (247 aa)) are disordered. A compositionally biased stretch (gly residues) spans 61-86 (NGGGGSVGGGGGGGGGSGGGGGGGGQ). Low complexity-rich tracts occupy residues 108 to 126 (RGGN…NQKS) and 145 to 197 (ANNA…QNQA). Gly residues-rich tracts occupy residues 201 to 220 (RGGG…GGGG) and 228 to 242 (SRGG…GGGN). RRM domains follow at residues 281–353 (NRLY…FAPN) and 355–441 (TILR…DDND). Residues 484–582 (DLFKSKQDAL…DMRRRQQENT (99 aa)) adopt a coiled-coil conformation. 2 disordered regions span residues 515-571 (QETE…VRQE) and 597-698 (QEGF…RRRF). Over residues 518–561 (ELSRQELRKRESDNERKKLEWEMREKQAEEMRKREEETMRRHQT) the composition is skewed to basic and acidic residues. Over residues 599–623 (GFGGGNNGGGGGGGGGGGGVGGGVG) the composition is skewed to gly residues. Low complexity-rich tracts occupy residues 624–636 (NSNF…NSNS) and 643–660 (GNNN…GANN).

In terms of biological role, required for normal vision and courtship behavior in Drosophila. The protein is Protein no-on-transient A (nonA) of Drosophila littoralis (Fruit fly).